The following is a 685-amino-acid chain: Galactocerebrosidase (685 aa).

An N-terminal signal peptide occupies residues 1 to 42 (MAEWLLSASRQRRVKAMTAAAGSAGRAAVPFLLCALLAPGGA). Thr-109 lines the substrate pocket. Asn-143 carries an N-linked (GlcNAc...) asparagine glycan. Substrate is bound by residues Trp-151 and Asn-197. The active-site Proton donor/acceptor is Glu-198. The active-site Nucleophile is the Glu-274. Cys-287 and Cys-394 form a disulfide bridge. Asn-379 is a glycosylation site (N-linked (GlcNAc...) asparagine). Arg-396 is a substrate binding site. N-linked (GlcNAc...) asparagine glycosylation is found at Asn-403, Asn-451, Asn-556, Asn-559, and Asn-602.

Belongs to the glycosyl hydrolase 59 family.

It is found in the lysosome. The catalysed reaction is a beta-D-galactosyl-(1&lt;-&gt;1')-N-acylsphing-4-enine + H2O = an N-acylsphing-4-enine + D-galactose. The enzyme catalyses beta-D-galactosyl-(1&lt;-&gt;1)-sphing-4-enine + H2O = sphing-4-enine + D-galactose. It carries out the reaction a D-galactosylceramide + H2O = an N-acyl-sphingoid base + D-galactose. In terms of biological role, hydrolyzes the galactose ester bonds of glycolipids such as galactosylceramide and galactosylsphingosine. Enzyme with very low activity responsible for the lysosomal catabolism of galactosylceramide, a major lipid in myelin, kidney and epithelial cells of small intestine and colon. In Macaca mulatta (Rhesus macaque), this protein is Galactocerebrosidase.